The primary structure comprises 73 residues: Large ribosomal subunit protein bL31c (73 aa).

It belongs to the bacterial ribosomal protein bL31 family. Type A subfamily. In terms of assembly, part of the 50S ribosomal subunit.

The protein resides in the plastid. It is found in the chloroplast. Functionally, binds the 23S rRNA. This is Large ribosomal subunit protein bL31c from Palmaria palmata (Dulse).